We begin with the raw amino-acid sequence, 185 residues long: Ribosome-recycling factor (185 aa).

Belongs to the RRF family.

It localises to the cytoplasm. In terms of biological role, responsible for the release of ribosomes from messenger RNA at the termination of protein biosynthesis. May increase the efficiency of translation by recycling ribosomes from one round of translation to another. The sequence is that of Ribosome-recycling factor from Streptococcus pneumoniae serotype 19F (strain G54).